The chain runs to 285 residues: V-type proton ATPase subunit D (285 aa).

The span at 208 to 226 (QKTKENAEKADSVTKEEHQ) shows a compositional bias: basic and acidic residues. The segment at 208-285 (QKTKENAEKA…ENDSDEEVIF (78 aa)) is disordered. Serine 219 bears the Phosphoserine mark. The span at 227 to 236 (GGSNTLQQTK) shows a compositional bias: polar residues. Residues 248 to 263 (VGKEVINEVENSKDDT) show a composition bias toward basic and acidic residues. The span at 271–285 (TDDEEENDSDEEVIF) shows a compositional bias: acidic residues.

This sequence belongs to the V-ATPase D subunit family. V-ATPase is a heteromultimeric enzyme composed of a peripheral catalytic V1 complex (components A to H) attached to an integral membrane V0 proton pore complex (components: a, c, c', c'', d, e, f and VOA1).

The protein resides in the vacuole membrane. Functionally, subunit of the V1 complex of vacuolar(H+)-ATPase (V-ATPase), a multisubunit enzyme composed of a peripheral complex (V1) that hydrolyzes ATP and a membrane integral complex (V0) that translocates protons. V-ATPase is responsible for acidifying and maintaining the pH of intracellular compartments. The sequence is that of V-type proton ATPase subunit D (vma8) from Schizosaccharomyces pombe (strain 972 / ATCC 24843) (Fission yeast).